The primary structure comprises 612 residues: MIQVLLVIICLEAFPYQGSSIILESGNVNDYEVVYPRKVTALSKGAVHPKYEDAMQYEFKVNGEPVVLHLEKNKGLFSEDYSEIHYSPDGREITTYPLVEDHCYYHGRIQNDADSSASISACNGLKGHFKLQGEMYLIEPFKLPDSEAHAVFKYENVEKEDEAPKMCGVTETNWESDEPIKKASLLNLTPEQQAYLDAKKYVEFVVVLDHGMYKKYKDDLDKIKRRIYEIVNTMNEMFIPLNICVALTGLEIWSKGDKINVTSESWFTLILFTNWRGADLLKRKSHDNAQLLTNTDFDGSTIGRAHIGSMCHPYLSVGIIQDYSPVNLLVASTMAHEMGHNLGMHHDNDTCTCGAPSCVMAAAISKDPSKLFSNCSQEYQRKYLIKNRPQCLLNKPLRTDIISPPVCGNELLEVGEECDCGTPENCRDPCCNATTCKLTPGSQCVEGLCCDQCRFRKTGTECRAAKHDCDLPESCTGQSADCPMDDFQRNGHPCQNNNGYCYNGKCPTMENQCIDLVGPKATVAEDSCFKDNQKGNDYGYCRKENGKKIPCEPQDVKCGRLYCNDNSPGQNNPCKCIYFPRNEDRGMVLPGTKCADGKVCSNRHCVDVATAY.

The first 20 residues, 1–20 (MIQVLLVIICLEAFPYQGSS), serve as a signal peptide directing secretion. Positions 21–187 (IILESGNVND…EPIKKASLLN (167 aa)) are excised as a propeptide. Residues 200–396 (KYVEFVVVLD…NRPQCLLNKP (197 aa)) enclose the Peptidase M12B domain. A Ca(2+)-binding site is contributed by Glu203. N-linked (GlcNAc...) asparagine glycosylation is present at Asn260. Ca(2+) is bound at residue Asp287. 3 disulfides stabilise this stretch: Cys311-Cys391, Cys351-Cys375, and Cys353-Cys358. Residue His336 participates in Zn(2+) binding. Glu337 is an active-site residue. Residues His340 and His346 each coordinate Zn(2+). The N-linked (GlcNAc...) asparagine glycan is linked to Asn348. Asn374 is a glycosylation site (N-linked (GlcNAc...) asparagine). Ca(2+) contacts are provided by Cys391, Asn394, Val406, Asn409, Leu411, Glu413, Glu416, and Asp419. A Disintegrin domain is found at 404 to 490 (PPVCGNELLE…DCPMDDFQRN (87 aa)). 14 disulfides stabilise this stretch: Cys407–Cys436, Cys418–Cys431, Cys420–Cys426, Cys430–Cys453, Cys444–Cys450, Cys449–Cys475, Cys462–Cys482, Cys469–Cys501, Cys494–Cys506, Cys513–Cys563, Cys528–Cys574, Cys541–Cys551, Cys558–Cys600, and Cys594–Cys605. Residue Asn432 is glycosylated (N-linked (GlcNAc...) asparagine). Residues 468 to 470 (DCD) carry the D/ECD-tripeptide motif. Ca(2+) is bound by residues Asp470, Leu471, Glu473, and Asp485.

The protein belongs to the venom metalloproteinase (M12B) family. P-III subfamily. P-IIIa sub-subfamily. As to quaternary structure, monomer. It depends on Zn(2+) as a cofactor. Post-translationally, highly glycosylated. Expressed by the venom gland.

The protein resides in the secreted. Its activity is regulated as follows. Inhibited by EDTA and o-phenanthroline. Not inhibited by PMSF, benzamidine, irreversible serine-proteinase inhibitors and cysteine proteinase inhibitor E-64. Its function is as follows. Potent activator of prothrombin (F2). Does not elicit any hemorrhagic response. Barely inhibits collagen-induced platelet aggregation. Binds neither collagen, nor the jararhagin monoclonal antibody MAJar3. Hydrolyzes the Aalpha-chain of fibrin and fibrinogen, without affecting the Bbeta- and gamma-chains. Is capable of triggering endothelial pro-inflammatory and procoagulant cell responses, but fails to trigger apoptosis. Induces von Willebrand factor release, and the expression of both ICAM1 and E-selectin (SELE) (without increase in VCAM1) in endothelial cells (HUVEC). Is also able to up-regulate the synthesis of the coagulation factor TF (F3). Enhances nitric oxide (NO) generation, prostacyclin production and interleukin-8 release. The sequence is that of Zinc metalloproteinase-disintegrin-like berythractivase from Bothrops erythromelas (Caatinga lance head).